Consider the following 97-residue polypeptide: Protein RADIALIS-like 6 (97 aa).

The SANT domain maps to 7-59; the sequence is SSISPWTFSQNKMFERALAVYDKDTPDRWHNVAKAVGGKTVEEVKRHYDILVE.

As to expression, expressed in the micropylar endosperm surrounding globular-stage embryos but no expression was detected elsewhere, including floral tissues.

It is found in the nucleus. Its function is as follows. Probable transcription factor. This chain is Protein RADIALIS-like 6 (RL6), found in Arabidopsis thaliana (Mouse-ear cress).